The following is a 282-amino-acid chain: Acetyl-coenzyme A carboxylase carboxyl transferase subunit beta (282 aa).

Residues 26–282 form the CoA carboxyltransferase N-terminal domain; the sequence is GLWHQTPTGK…VSKTVKLLVH (257 aa).

It belongs to the AccD/PCCB family. As to quaternary structure, acetyl-CoA carboxylase is a heterohexamer composed of biotin carboxyl carrier protein (AccB), biotin carboxylase (AccC) and two subunits each of ACCase subunit alpha (AccA) and ACCase subunit beta (AccD).

It localises to the cytoplasm. The enzyme catalyses N(6)-carboxybiotinyl-L-lysyl-[protein] + acetyl-CoA = N(6)-biotinyl-L-lysyl-[protein] + malonyl-CoA. Its pathway is lipid metabolism; malonyl-CoA biosynthesis; malonyl-CoA from acetyl-CoA: step 1/1. In terms of biological role, component of the acetyl coenzyme A carboxylase (ACC) complex. Biotin carboxylase (BC) catalyzes the carboxylation of biotin on its carrier protein (BCCP) and then the CO(2) group is transferred by the transcarboxylase to acetyl-CoA to form malonyl-CoA. The sequence is that of Acetyl-coenzyme A carboxylase carboxyl transferase subunit beta from Flavobacteriaceae bacterium (strain 3519-10).